Here is a 271-residue protein sequence, read N- to C-terminus: Ribosomal RNA small subunit methyltransferase A (271 aa).

Residues Leu-20, Gly-45, Glu-66, Asp-90, and Asn-112 each coordinate S-adenosyl-L-methionine.

Belongs to the class I-like SAM-binding methyltransferase superfamily. rRNA adenine N(6)-methyltransferase family. RsmA subfamily.

It is found in the cytoplasm. The enzyme catalyses adenosine(1518)/adenosine(1519) in 16S rRNA + 4 S-adenosyl-L-methionine = N(6)-dimethyladenosine(1518)/N(6)-dimethyladenosine(1519) in 16S rRNA + 4 S-adenosyl-L-homocysteine + 4 H(+). In terms of biological role, specifically dimethylates two adjacent adenosines (A1518 and A1519) in the loop of a conserved hairpin near the 3'-end of 16S rRNA in the 30S particle. May play a critical role in biogenesis of 30S subunits. This is Ribosomal RNA small subunit methyltransferase A from Blochmanniella floridana.